We begin with the raw amino-acid sequence, 165 residues long: Endoribonuclease YbeY (165 aa).

Residues His131, His135, and His141 each coordinate Zn(2+).

Belongs to the endoribonuclease YbeY family. It depends on Zn(2+) as a cofactor.

It is found in the cytoplasm. Single strand-specific metallo-endoribonuclease involved in late-stage 70S ribosome quality control and in maturation of the 3' terminus of the 16S rRNA. This Agathobacter rectalis (strain ATCC 33656 / DSM 3377 / JCM 17463 / KCTC 5835 / VPI 0990) (Eubacterium rectale) protein is Endoribonuclease YbeY.